The sequence spans 457 residues: Choline kinase alpha (457 aa).

The tract at residues M1–R86 is disordered. A compositionally biased stretch (low complexity) spans P13–G32. Pro residues predominate over residues L55 to D80. Residues R117–M123, R146, and Q207–R213 each bind ATP. G119–S121 provides a ligand contact to phosphocholine. Position 247 is an N6-acetyllysine (K247). Position 279 is a phosphoserine (S279). ATP-binding residues include Q308 and D330.

It belongs to the choline/ethanolamine kinase family. Homodimer. Heterodimer with CHKB. As to quaternary structure, monomer; acetylation by KAT5 promotes dissociation of the homodimer and monomerization. In terms of assembly, (Microbial infection) Interacts with PI4KA/PI4KIIIalpha; CHKA bridges PI4KA/PI4KIIIalpha and hepatitis C virus (HCV) non-structural protein 5A (NS5A) and potentiates NS5A-stimulated PI4KA activity, which then facilitates the targeting of the ternary complex to the ER for viral replication. Phosphorylated at Ser-279 by AMPK in response to glucose deprivation, leading to localization to lipid droplets. Post-translationally, acetylated by KAT5 at Lys-247 following phosphorylation by AMPK, leading to monomerization and conversion into a tyrosine-protein kinase.

It localises to the cytoplasm. It is found in the cytosol. The protein localises to the lipid droplet. The enzyme catalyses choline + ATP = phosphocholine + ADP + H(+). The catalysed reaction is ethanolamine + ATP = phosphoethanolamine + ADP + H(+). It catalyses the reaction L-tyrosyl-[protein] + ATP = O-phospho-L-tyrosyl-[protein] + ADP + H(+). It participates in phospholipid metabolism; phosphatidylcholine biosynthesis; phosphocholine from choline: step 1/1. It functions in the pathway phospholipid metabolism; phosphatidylethanolamine biosynthesis; phosphatidylethanolamine from ethanolamine: step 1/3. With respect to regulation, homodimerization or heterodimerization is required for the choline and ethanolamine kinase activities. Its function is as follows. Plays a key role in phospholipid biosynthesis by catalyzing the phosphorylation of free choline to phosphocholine, the first step in phosphatidylcholine biosynthesis. Also phosphorylates ethanolamine, thereby contributing to phosphatidylethanolamine biosynthesis. Has higher activity with choline. May contribute to tumor cell growth. Functionally, this isoform plays a key role in lipolysis of lipid droplets following glucose deprivation. In response to glucose deprivation, phosphorylated by AMPK, promoting localization to lipid droplets. Phosphorylation is followed by acetylation by KAT5, leading to dissociation of the homodimer into a monomer. Monomeric CHKA isoform 1 is converted into a tyrosine-protein kinase, which phosphorylates lipid droplet structural proteins PLIN2 and PLIN3, leading to lipolysis of lipid droplets. The chain is Choline kinase alpha (CHKA) from Homo sapiens (Human).